A 105-amino-acid chain; its full sequence is Large ribosomal subunit protein uL24 (105 aa).

This sequence belongs to the universal ribosomal protein uL24 family. In terms of assembly, part of the 50S ribosomal subunit.

Functionally, one of two assembly initiator proteins, it binds directly to the 5'-end of the 23S rRNA, where it nucleates assembly of the 50S subunit. In terms of biological role, one of the proteins that surrounds the polypeptide exit tunnel on the outside of the subunit. The protein is Large ribosomal subunit protein uL24 of Xanthomonas axonopodis pv. citri (strain 306).